Reading from the N-terminus, the 356-residue chain is Cdc42 effector protein 4 (356 aa).

Lysine 5 carries the post-translational modification N6-methyllysine. Serine 18 is modified (phosphoserine). Positions 27–41 (ISAPLGDFRHTMHVG) constitute a CRIB domain. Residues 51-102 (SFLNSKAGEPDGESLDEQPSSSSSKRSLLSRKFRGSKRSQSVTRGEREQRDM) form a disordered region. The residue at position 64 (serine 64) is a Phosphoserine. The segment covering 78–87 (LLSRKFRGSK) has biased composition (basic residues). Residues serine 105, serine 109, and serine 118 each carry the phosphoserine modification. 2 disordered regions span residues 122 to 182 (LNEK…LDEQ) and 257 to 356 (VAAP…EIRV). The segment covering 123–132 (NEKEAAEKGT) has biased composition (basic and acidic residues). The segment covering 133–143 (SKLPKSLSSSP) has biased composition (low complexity). Phosphoserine occurs at positions 138, 140, 142, 174, 292, and 295. Low complexity predominate over residues 287 to 315 (AAAAPSPGSARSMGSHTTRDSSSLSSCTS). A compositionally biased stretch (basic and acidic residues) spans 318 to 344 (LEERSPAFRGPDRARAAVSRQPDKEFS). Over residues 345–356 (FMDEEEEDEIRV) the composition is skewed to acidic residues.

Belongs to the BORG/CEP family. As to quaternary structure, interacts with CDC42 and RHOQ, in a GTP-dependent manner. Not detected in any of the adult tissues tested. May be expressed only in fetal or embryonic tissues.

It localises to the endomembrane system. It is found in the cytoplasm. The protein localises to the cytoskeleton. Its function is as follows. Probably involved in the organization of the actin cytoskeleton. May act downstream of CDC42 to induce actin filament assembly leading to cell shape changes. Induces pseudopodia formation, when overexpressed in fibroblasts. The polypeptide is Cdc42 effector protein 4 (CDC42EP4) (Homo sapiens (Human)).